The primary structure comprises 334 residues: Beta-hexosaminidase (334 aa).

Residues Asp60, Arg68, Arg133, and 163–164 (KH) each bind substrate. His176 acts as the Proton donor/acceptor in catalysis. Asp247 (nucleophile) is an active-site residue.

The protein belongs to the glycosyl hydrolase 3 family. NagZ subfamily.

Its subcellular location is the cytoplasm. The enzyme catalyses Hydrolysis of terminal non-reducing N-acetyl-D-hexosamine residues in N-acetyl-beta-D-hexosaminides.. The protein operates within cell wall biogenesis; peptidoglycan recycling. Functionally, plays a role in peptidoglycan recycling by cleaving the terminal beta-1,4-linked N-acetylglucosamine (GlcNAc) from peptide-linked peptidoglycan fragments, giving rise to free GlcNAc, anhydro-N-acetylmuramic acid and anhydro-N-acetylmuramic acid-linked peptides. The protein is Beta-hexosaminidase of Xanthomonas euvesicatoria pv. vesicatoria (strain 85-10) (Xanthomonas campestris pv. vesicatoria).